Reading from the N-terminus, the 378-residue chain is CST complex subunit STN1 (378 aa).

The interval 8-195 (MECESSPREE…KVYDQPFRNP (188 aa)) is interaction with CTC1. A DNA-binding region (OB) is located at residues 64 to 165 (VDIMGAVISV…EICANIYYKV (102 aa)). Winged helix-turn-helix (wHTH) regions lie at residues 201-305 (EALN…YVTT) and 306-378 (KDKD…YAAF).

The protein belongs to the STN1 family. As to quaternary structure, component of the CST complex, composed of TEN1/C17orf106, CTC1/C17orf68 and STN1; in the complex interacts directly with TEN1 and CTC1. Interacts with ACD/TPP1. Interacts with POT1 and POLA1.

The protein localises to the nucleus. The protein resides in the chromosome. It is found in the telomere. Functionally, component of the CST complex proposed to act as a specialized replication factor promoting DNA replication under conditions of replication stress or natural replication barriers such as the telomere duplex. The CST complex binds single-stranded DNA with high affinity in a sequence-independent manner, while isolated subunits bind DNA with low affinity by themselves. Initially the CST complex has been proposed to protect telomeres from DNA degradation. However, the CST complex has been shown to be involved in several aspects of telomere replication. The CST complex inhibits telomerase and is involved in telomere length homeostasis; it is proposed to bind to newly telomerase-synthesized 3' overhangs and to terminate telomerase action implicating the association with the ACD:POT1 complex thus interfering with its telomerase stimulation activity. The CST complex is also proposed to be involved in fill-in synthesis of the telomeric C-strand probably implicating recruitment and activation of DNA polymerase alpha. The CST complex facilitates recovery from many forms of exogenous DNA damage; seems to be involved in the re-initiation of DNA replication at repaired forks and/or dormant origins. Required for efficicient replication of the duplex region of the telomere. Promotes efficient replication of lagging-strand telomeres. Promotes general replication start following replication-fork stalling implicating new origin firing. May be in involved in C-strand fill-in during late S/G2 phase independent of its role in telomere duplex replication. The chain is CST complex subunit STN1 from Mus musculus (Mouse).